The primary structure comprises 438 residues: GTPase Obg (438 aa).

An Obg domain is found at 2–160 (SMFLDTAKIS…RELELELKIL (159 aa)). Residues 128–147 (NIRFATPRNPAPEIAENGEP) form a disordered region. One can recognise an OBG-type G domain in the interval 161–338 (ADVGLVGFPS…LLDATANLLA (178 aa)). Residues 167 to 174 (GFPSVGKS), 192 to 196 (FTTIV), 214 to 217 (DLPG), 284 to 287 (NKMD), and 319 to 321 (STL) contribute to the GTP site. Mg(2+) contacts are provided by Ser174 and Thr194. The OCT domain maps to 360-438 (GFSEEEKAFE…IGNFEFEFVD (79 aa)).

This sequence belongs to the TRAFAC class OBG-HflX-like GTPase superfamily. OBG GTPase family. In terms of assembly, monomer. It depends on Mg(2+) as a cofactor.

It is found in the cytoplasm. Its function is as follows. An essential GTPase which binds GTP, GDP and possibly (p)ppGpp with moderate affinity, with high nucleotide exchange rates and a fairly low GTP hydrolysis rate. Plays a role in control of the cell cycle, stress response, ribosome biogenesis and in those bacteria that undergo differentiation, in morphogenesis control. In Streptococcus uberis (strain ATCC BAA-854 / 0140J), this protein is GTPase Obg.